A 297-amino-acid polypeptide reads, in one-letter code: SH2 domain-containing protein 6 (297 aa).

2 disordered regions span residues 1 to 61 (MSCP…FPTR) and 74 to 93 (MNPQPAKQGPVFGRQGRGTS). Residues 36–45 (PSKPPLPPPQ) show a composition bias toward pro residues. The SH2 domain occupies 187–295 (WYSGNCDRQS…RGLTYLRFPT (109 aa)).

The sequence is that of SH2 domain-containing protein 6 (Sh2d6) from Mus musculus (Mouse).